The chain runs to 764 residues: Complement factor B (764 aa).

Positions Met-1 to Thr-25 are cleaved as a signal peptide. Sushi domains are found at residues Glu-35–Ala-100, Ile-101–Asn-160, and Gly-163–Asp-220. Disulfide bonds link Cys-37–Cys-76, Cys-62–Cys-98, Cys-103–Cys-145, Cys-131–Cys-158, Cys-165–Cys-205, and Cys-191–Cys-218. Asn-122 and Asn-142 each carry an N-linked (GlcNAc...) asparagine glycan. The VWFA domain occupies Asn-270–Ile-469. 2 residues coordinate Mg(2+): Ser-278 and Ser-280. Residue Asn-285 is glycosylated (N-linked (GlcNAc...) asparagine). Thr-353 is a binding site for Mg(2+). N-linked (GlcNAc...) asparagine glycosylation occurs at Asn-378. Residues Leu-477–Gln-757 form the Peptidase S1 domain. Cystine bridges form between Cys-478/Cys-596, Cys-511/Cys-527, Cys-599/Cys-615, Cys-656/Cys-682, and Cys-695/Cys-725. Active-site charge relay system residues include His-526 and Asp-576. Ser-699 functions as the Charge relay system in the catalytic mechanism.

It belongs to the peptidase S1 family. Monomer. Interacts with complement C3b; this interaction is dependent on the presence of Mg(2+). In terms of assembly, catalytic component of the C3 convertase of the alternative complement pathway, also named C3bBb, composed of complement factor B Bb and complement C3b. Catalytic component of the C5 convertase of the alternative complement pathway, also named C3bBb3b, composed of complement factor B Bb and additional molecules of complement C3b. Interacts to CFP; this interaction contributes to the stabilization of the active C3-convertase enzyme complex. Mg(2+) is required as a cofactor. Requires Mn(2+) as cofactor. Cleaved by CFD following activation of the alternative complement system, generating Ba and Bb chains. Cleavage and activation takes place when CFB is already associated with complement C3b.

It localises to the secreted. The protein localises to the cell surface. It carries out the reaction Cleavage of Arg-|-Ser bond in complement component C3 alpha-chain to yield C3a and C3b, and Arg-|-Xaa bond in complement component C5 alpha-chain to yield C5a and C5b.. Precursor of the catalytic component of the C3 and C5 convertase complexes of the alternative pathway of the complement system, a cascade of proteins that leads to phagocytosis and breakdown of pathogens and signaling that strengthens the adaptive immune system. The alternative complement pathway acts as an amplification loop that enhances other complement pathways (classical, lectin and GZMK) by promoting formation of additional C3 and C5 convertases. CFB is cleaved and activated by CFD to generate Ba and Bb chains; Bb chain constituting the catalytic component of the C3 and C5 convertases. Functionally, serine protease component of the complement C3 and C5 convertase complexes of the alternative complement pathway. Following cleavage and activation by factor D (CFD), forms the C3 convertase together with complement C3b. As part of the C3 convertase, cleaves and activates C3 into C3a anaphylatoxin and C3b opsonin, the next components of the complement pathways. When an additional complement C3b molecule binds to the C3 convertase, forms the C5 convertase, which cleaves and activates C5 into C5a anaphylatoxin and C5b component of the membrane attack complex. Its function is as follows. Involved in proliferation and differentiation of preactivated B-lymphocytes, rapid spreading of peripheral blood monocytes, stimulation of lymphocyte blastogenesis and lysis of erythrocytes. The sequence is that of Complement factor B (CFB) from Pan troglodytes (Chimpanzee).